Reading from the N-terminus, the 282-residue chain is Bifunctional protein FolD (282 aa).

NADP(+) is bound by residues 165–167, Ser-190, and Thr-231; that span reads GRS.

This sequence belongs to the tetrahydrofolate dehydrogenase/cyclohydrolase family. In terms of assembly, homodimer.

The catalysed reaction is (6R)-5,10-methylene-5,6,7,8-tetrahydrofolate + NADP(+) = (6R)-5,10-methenyltetrahydrofolate + NADPH. The enzyme catalyses (6R)-5,10-methenyltetrahydrofolate + H2O = (6R)-10-formyltetrahydrofolate + H(+). Its pathway is one-carbon metabolism; tetrahydrofolate interconversion. Functionally, catalyzes the oxidation of 5,10-methylenetetrahydrofolate to 5,10-methenyltetrahydrofolate and then the hydrolysis of 5,10-methenyltetrahydrofolate to 10-formyltetrahydrofolate. The polypeptide is Bifunctional protein FolD (Clostridium botulinum (strain Eklund 17B / Type B)).